A 226-amino-acid chain; its full sequence is MKMVAPWTRFYSNSCCLCCHVRTGTILLGVWYLILNAVVLLILLSALADPDHYHFSSSELGGDFEFMDDANMCIAIAISVLMILICAMATYGAYKQRAAWIIPFFCYQIFDFALNTLVAVTVLVYPNSIQEYIRQLPPDFPYKDDIMSVNPTCLVLIILLFISIILAFKGYLISCVWNCYRYINGRNSSDVLVYVTSNDSTVLLPPYDDATVNSATKEPPPPYVSA.

4 helical membrane-spanning segments follow: residues Ile-26–Ala-46, Met-72–Gly-92, Trp-100–Val-120, and Cys-153–Ile-173. Residues Pro-205–Pro-221 form a required for NEDD4 interaction region.

Belongs to the LAPTM4/LAPTM5 transporter family. As to quaternary structure, homooligomer; upon reaching the lysosomes. Interacts with MCOLN1. Interacts with NEDD4; may play a role in the lysosomal sorting of LAPTM4B; enhances HGS association with NEDD4; mediates inhibition of EGFR degradation. Interacts with PIP5K1C; promotes SNX5 association with LAPTM4B; kinase activity of PIP5K1C is required; interaction is regulated by phosphatidylinositol 4,5-bisphosphate generated by PIP5K1C. Interacts with HGS; promotes HGS ubiquitination. Interacts with SNX5. Interacts with SLC3A2 and SLC7A5; recruits SLC3A2 and SLC7A5 to lysosomes to promote leucine uptake into these organelles and is required for mTORC1 activation. Interacts with LRRC32; decreases TGFB1 production in regulatory T cells. Interacts with BECN1; competes with EGFR for LAPTM4B binding; regulates EGFR activity. Interacts with EGFR; positively correlates with EGFR activation. Undergoes proteolytic cleavage following delivery to the lysosomes. Post-translationally, ubiquitinated by NEDD4. As to expression, strongly expressed in fetal ovary, testis, adrenal gland, liver and uterus, and weakly expressed in the spleen.

It is found in the endomembrane system. The protein localises to the late endosome membrane. Its subcellular location is the cell membrane. It localises to the cell projection. The protein resides in the lysosome membrane. It is found in the endosome membrane. The protein localises to the endosome. Its subcellular location is the multivesicular body membrane. It localises to the multivesicular body lumen. Its function is as follows. Required for optimal lysosomal function. Blocks EGF-stimulated EGFR intraluminal sorting and degradation. Conversely by binding with the phosphatidylinositol 4,5-bisphosphate, regulates its PIP5K1C interaction, inhibits HGS ubiquitination and relieves LAPTM4B inhibition of EGFR degradation. Recruits SLC3A2 and SLC7A5 (the Leu transporter) to the lysosome, promoting entry of leucine and other essential amino acid (EAA) into the lysosome, stimulating activation of proton-transporting vacuolar (V)-ATPase protein pump (V-ATPase) and hence mTORC1 activation. Plays a role as negative regulator of TGFB1 production in regulatory T cells. Binds ceramide and facilitates its exit from late endosome in order to control cell death pathways. The sequence is that of Lysosomal-associated transmembrane protein 4B from Bos taurus (Bovine).